We begin with the raw amino-acid sequence, 108 residues long: MSRVSEYGVPEGVRESDSDTDSVFMYQHTELMQNNASPLVVRARPPAVLIPLVDVPRPRSRRKASAQLKMQMDRLCNVLGVVLQMATLALVTYIAFVVHTRATSCKRE.

The Intravirion portion of the chain corresponds to 1–77 (MSRVSEYGVP…LKMQMDRLCN (77 aa)). Residues 78–98 (VLGVVLQMATLALVTYIAFVV) form a helical; Signal-anchor for type II membrane protein membrane-spanning segment. The Virion surface portion of the chain corresponds to 99 to 108 (HTRATSCKRE).

The protein belongs to the varicellovirus ORF1 protein family. As to quaternary structure, homodimer. In terms of processing, phosphorylated.

Its subcellular location is the virion membrane. It is found in the host Golgi apparatus membrane. The protein is Structural protein 1 of Homo sapiens (Human).